A 314-amino-acid polypeptide reads, in one-letter code: BTB/POZ domain-containing protein KCTD17 (314 aa).

The 71-residue stretch at 24–94 folds into the BTB domain; that stretch reads KWVRLNVGGT…LRHGKLVLDK (71 aa). The disordered stretch occupies residues 190 to 268; that stretch reads STPNGLSSES…PAGGSRPHPL (79 aa). Positions 196-239 form a coiled coil; the sequence is SSESSRKTKSTEEQLEEQQQQEEEVEEVEVEQVQVEADAQEKAQ. The span at 208-225 shows a compositional bias: acidic residues; the sequence is EQLEEQQQQEEEVEEVEV.

As to quaternary structure, homopentamer; forms a closed pentamer. Interacts with CUL3; interaction is direct and forms a 5:5 heterodecamer. Interacts with TCHP. Interacts with CUL3, as part of the BCR(KCTD17) E3 ubiquitin ligase complex, at least composed of CUL3, KCTD17 and RBX1. As to expression, highly expressed in brain. Highest expression is observed in the putamen and the thalamus.

The protein localises to the cytoplasm. Substrate-adapter for CUL3-RING ubiquitin ligase complexes which mediates the ubiquitination and subsequent proteasomal degradation of TCHP, a protein involved in ciliogenesis down-regulation. Thereby, positively regulates ciliogenesis, playing a crucial role in the initial steps of axoneme extension. May also play a role in endoplasmic reticulum calcium ion homeostasis. The sequence is that of BTB/POZ domain-containing protein KCTD17 from Homo sapiens (Human).